The chain runs to 455 residues: Glutamate--tRNA ligase (455 aa).

The 'HIGH' region motif lies at 8–18; it reads PSPTGYLHIGG. The 'KMSKS' region motif lies at 231 to 235; that stretch reads RLSKR. Residue lysine 234 participates in ATP binding.

The protein belongs to the class-I aminoacyl-tRNA synthetase family. Glutamate--tRNA ligase type 1 subfamily. Monomer.

Its subcellular location is the cytoplasm. The catalysed reaction is tRNA(Glu) + L-glutamate + ATP = L-glutamyl-tRNA(Glu) + AMP + diphosphate. In terms of biological role, catalyzes the attachment of glutamate to tRNA(Glu) in a two-step reaction: glutamate is first activated by ATP to form Glu-AMP and then transferred to the acceptor end of tRNA(Glu). This Vesicomyosocius okutanii subsp. Calyptogena okutanii (strain HA) protein is Glutamate--tRNA ligase.